Consider the following 169-residue polypeptide: Der GTPase-activating protein YihI (169 aa).

Disordered regions lie at residues 1 to 99 and 146 to 169; these read MKPS…QAEL and SYDD…LRGN. Basic residues predominate over residues 10–19; the sequence is SKGHAKARRK. The segment covering 20–30 has biased composition (basic and acidic residues); sequence TREELDQEARD. The span at 31-40 shows a compositional bias: basic residues; sequence RKRQKKRRGH. Positions 49–58 are enriched in polar residues; that stretch reads GNTTSGSKGQ. The segment covering 147 to 159 has biased composition (acidic residues); it reads YDDDEEEEEDEKQ. A compositionally biased stretch (basic and acidic residues) spans 160 to 169; that stretch reads EDMMRLLRGN.

It belongs to the YihI family. In terms of assembly, interacts with Der.

Functionally, a GTPase-activating protein (GAP) that modifies Der/EngA GTPase function. May play a role in ribosome biogenesis. In Escherichia coli O45:K1 (strain S88 / ExPEC), this protein is Der GTPase-activating protein YihI.